The chain runs to 41 residues: Large ribosomal subunit protein bL36 (41 aa).

The protein belongs to the bacterial ribosomal protein bL36 family.

The chain is Large ribosomal subunit protein bL36 from Xylella fastidiosa (strain M23).